We begin with the raw amino-acid sequence, 524 residues long: ORC1-type DNA replication protein 4 (524 aa).

Over residues 1–23 (MTDKSNNPAPASDPSTTETSNDA) the composition is skewed to polar residues. The disordered stretch occupies residues 1-67 (MTDKSNNPAP…DDPSDEASRG (67 aa)). Residues 128–132 (TGKTA), Tyr-325, and Arg-337 contribute to the ATP site.

Belongs to the CDC6/cdc18 family.

Its function is as follows. Involved in regulation of DNA replication. In Haloarcula marismortui (strain ATCC 43049 / DSM 3752 / JCM 8966 / VKM B-1809) (Halobacterium marismortui), this protein is ORC1-type DNA replication protein 4 (cdc6d).